The primary structure comprises 215 residues: ATP phosphoribosyltransferase (215 aa).

It belongs to the ATP phosphoribosyltransferase family. Short subfamily. Heteromultimer composed of HisG and HisZ subunits.

The protein resides in the cytoplasm. The enzyme catalyses 1-(5-phospho-beta-D-ribosyl)-ATP + diphosphate = 5-phospho-alpha-D-ribose 1-diphosphate + ATP. It participates in amino-acid biosynthesis; L-histidine biosynthesis; L-histidine from 5-phospho-alpha-D-ribose 1-diphosphate: step 1/9. Catalyzes the condensation of ATP and 5-phosphoribose 1-diphosphate to form N'-(5'-phosphoribosyl)-ATP (PR-ATP). Has a crucial role in the pathway because the rate of histidine biosynthesis seems to be controlled primarily by regulation of HisG enzymatic activity. The polypeptide is ATP phosphoribosyltransferase (Prochlorococcus marinus (strain MIT 9215)).